A 284-amino-acid chain; its full sequence is Polyamine aminopropyltransferase (284 aa).

The PABS domain occupies 2–237; the sequence is ELWYTEQHTE…GHWLFGFASK (236 aa). Residue Q31 participates in S-methyl-5'-thioadenosine binding. Residues H62 and D86 each contribute to the spermidine site. S-methyl-5'-thioadenosine contacts are provided by residues E106 and 137–138; that span reads DG. D155 serves as the catalytic Proton acceptor. Spermidine is bound at residue 155–158; the sequence is DSTD. P162 is an S-methyl-5'-thioadenosine binding site.

It belongs to the spermidine/spermine synthase family. Homodimer or homotetramer.

The protein localises to the cytoplasm. The catalysed reaction is S-adenosyl 3-(methylsulfanyl)propylamine + putrescine = S-methyl-5'-thioadenosine + spermidine + H(+). It participates in amine and polyamine biosynthesis; spermidine biosynthesis; spermidine from putrescine: step 1/1. In terms of biological role, catalyzes the irreversible transfer of a propylamine group from the amino donor S-adenosylmethioninamine (decarboxy-AdoMet) to putrescine (1,4-diaminobutane) to yield spermidine. The protein is Polyamine aminopropyltransferase of Alkaliphilus oremlandii (strain OhILAs) (Clostridium oremlandii (strain OhILAs)).